We begin with the raw amino-acid sequence, 221 residues long: Phosphate-specific transport system accessory protein PhoU homolog 1 (221 aa).

Belongs to the PhoU family. As to quaternary structure, homodimer.

The protein localises to the cytoplasm. In terms of biological role, plays a role in the regulation of phosphate uptake. In this role, it may bind, possibly as a chaperone, to PhoR, PhoP or a PhoR-PhoP complex to promote dephosphorylation of phospho-PhoP, or inhibit formation of the PhoR-PhoP transitory complex. The chain is Phosphate-specific transport system accessory protein PhoU homolog 1 (phoU1) from Mycobacterium bovis (strain ATCC BAA-935 / AF2122/97).